The primary structure comprises 579 residues: Type IV pilus assembly ATPase PilB (579 aa).

Position 340–345 (340–345) interacts with ATP; sequence GSGKTV. Residues Cys-470, Cys-473, Cys-507, and Cys-510 each contribute to the Zn(2+) site.

This sequence belongs to the GSP E family. Interacts with CpiA.

It localises to the cytoplasm. Inhibited by the inhibitory protein CpiA. ATPase component of the type IV pilus (T4P). Acts as a molecular motor to provide the energy that is required for biogenesis of the pilus and the extrusion of substrates generated in the cytoplasm. PilB is required for optimal T4P extension and, consequently, efficient natural transformation. May promote processive T4P extension. In Acinetobacter baylyi (strain ATCC 33305 / BD413 / ADP1), this protein is Type IV pilus assembly ATPase PilB.